We begin with the raw amino-acid sequence, 313 residues long: tRNA dimethylallyltransferase (313 aa).

Position 20–27 (20–27 (GPTGTGKS)) interacts with ATP. Position 22-27 (22-27 (TGTGKS)) interacts with substrate.

The protein belongs to the IPP transferase family. As to quaternary structure, monomer. Mg(2+) serves as cofactor.

It catalyses the reaction adenosine(37) in tRNA + dimethylallyl diphosphate = N(6)-dimethylallyladenosine(37) in tRNA + diphosphate. In terms of biological role, catalyzes the transfer of a dimethylallyl group onto the adenine at position 37 in tRNAs that read codons beginning with uridine, leading to the formation of N6-(dimethylallyl)adenosine (i(6)A). This Kocuria rhizophila (strain ATCC 9341 / DSM 348 / NBRC 103217 / DC2201) protein is tRNA dimethylallyltransferase.